A 211-amino-acid polypeptide reads, in one-letter code: PITH domain-containing protein GA19395 (211 aa).

One can recognise a PITH domain in the interval 20–192 (DHALEMGIEY…GVTICNYEAR (173 aa)).

It belongs to the PITHD1 family.

In Drosophila pseudoobscura pseudoobscura (Fruit fly), this protein is PITH domain-containing protein GA19395.